Reading from the N-terminus, the 355-residue chain is UDP-N-acetylglucosamine--N-acetylmuramyl-(pentapeptide) pyrophosphoryl-undecaprenol N-acetylglucosamine transferase (355 aa).

UDP-N-acetyl-alpha-D-glucosamine contacts are provided by residues 15-17, asparagine 127, arginine 163, serine 191, isoleucine 244, 263-268, and glutamine 288; these read TGG and ALTVSE.

The protein belongs to the glycosyltransferase 28 family. MurG subfamily.

The protein resides in the cell inner membrane. It carries out the reaction di-trans,octa-cis-undecaprenyl diphospho-N-acetyl-alpha-D-muramoyl-L-alanyl-D-glutamyl-meso-2,6-diaminopimeloyl-D-alanyl-D-alanine + UDP-N-acetyl-alpha-D-glucosamine = di-trans,octa-cis-undecaprenyl diphospho-[N-acetyl-alpha-D-glucosaminyl-(1-&gt;4)]-N-acetyl-alpha-D-muramoyl-L-alanyl-D-glutamyl-meso-2,6-diaminopimeloyl-D-alanyl-D-alanine + UDP + H(+). It functions in the pathway cell wall biogenesis; peptidoglycan biosynthesis. Functionally, cell wall formation. Catalyzes the transfer of a GlcNAc subunit on undecaprenyl-pyrophosphoryl-MurNAc-pentapeptide (lipid intermediate I) to form undecaprenyl-pyrophosphoryl-MurNAc-(pentapeptide)GlcNAc (lipid intermediate II). The chain is UDP-N-acetylglucosamine--N-acetylmuramyl-(pentapeptide) pyrophosphoryl-undecaprenol N-acetylglucosamine transferase from Escherichia coli O45:K1 (strain S88 / ExPEC).